A 354-amino-acid chain; its full sequence is NAD-dependent epimerase/dehydratase ALT6 (354 aa).

Residues Lys-41 and Tyr-174 each coordinate NADP(+).

The protein belongs to the NAD(P)-dependent epimerase/dehydratase family. Dihydroflavonol-4-reductase subfamily.

The protein operates within mycotoxin biosynthesis. In terms of biological role, NAD-dependent epimerase/dehydratase; part of the gene cluster that mediates the biosynthesis of the host-selective toxins (HSTs) AAL-toxins, sphinganine-analog mycotoxins responsible for Alternaria stem canker on tomato by the tomato pathotype. The biosynthesis starts with the polyketide synthase ALT1-catalyzed C-16 carbon chain assembly from one starter acetyl-CoA unit with malonyl-CoA extender units. ALT1 also selectively transfers methyl groups at the first and the third cycle of chain elongation for AAL toxin. The C-16 polyketide chain is released from the enzyme by a nucleophilic attack of a carbanion, which is derived from R-carbon of glycin by decarboxylation, on the carbonyl carbon of polyketide acyl chain. This step is probably catalyzed by a pyridoxal 5'-phosphate-dependent aminoacyl transferase ALT4. The respective functions of the other enzymes encoded by the cluster have still to be elucidated. The sphingosine N-acyltransferase-like protein ALT7 seems not to act as a resistance/self-tolerance factor against the toxin in the toxin biosynthetic gene cluster, contrary to what is expected. The polypeptide is NAD-dependent epimerase/dehydratase ALT6 (Alternaria alternata (Alternaria rot fungus)).